The chain runs to 456 residues: Glycerol-3-phosphate acyltransferase 4 (456 aa).

The first 37 residues, 1 to 37 (MFLLLPFDSLIVNLLGISLTVLFTLLLVFIIVPAIFG), serve as a signal peptide directing secretion. The next 2 helical transmembrane spans lie at 156–176 (ISLR…CFLL) and 180–200 (IALA…VGYL). An N-linked (GlcNAc...) asparagine glycan is attached at Asn-247. Residues 248–253 (HTSPID) carry the HXXXXD motif motif. N-linked (GlcNAc...) asparagine glycans are attached at residues Asn-327, Asn-328, and Asn-362.

This sequence belongs to the 1-acyl-sn-glycerol-3-phosphate acyltransferase family. As to expression, ubiquitous. High levels in testis. Relatively high level of expression in skeletal muscle and heart. Relatively low level of expression in lung.

The protein localises to the endoplasmic reticulum membrane. The catalysed reaction is sn-glycerol 3-phosphate + an acyl-CoA = a 1-acyl-sn-glycero-3-phosphate + CoA. The enzyme catalyses dodecanoyl-CoA + sn-glycerol 3-phosphate = 1-dodecanoyl-sn-glycerol 3-phosphate + CoA. It carries out the reaction sn-glycerol 3-phosphate + hexadecanoyl-CoA = 1-hexadecanoyl-sn-glycero-3-phosphate + CoA. It catalyses the reaction sn-glycerol 3-phosphate + octadecanoyl-CoA = 1-octadecanoyl-sn-glycero-3-phosphate + CoA. The catalysed reaction is sn-glycerol 3-phosphate + (9Z)-octadecenoyl-CoA = 1-(9Z-octadecenoyl)-sn-glycero-3-phosphate + CoA. The enzyme catalyses (9Z,12Z)-octadecadienoyl-CoA + sn-glycerol 3-phosphate = 1-(9Z,12Z)-octadecadienoyl-sn-glycero-3-phosphate + CoA. The protein operates within phospholipid metabolism; CDP-diacylglycerol biosynthesis; CDP-diacylglycerol from sn-glycerol 3-phosphate: step 1/3. With respect to regulation, inhibited by N-ethylmaleimide (NEM). Converts glycerol-3-phosphate to 1-acyl-sn-glycerol-3-phosphate (lysophosphatidic acid or LPA) by incorporating an acyl moiety at the sn-1 position of the glycerol backbone. Active against both saturated and unsaturated long-chain fatty acyl-CoAs. Protects cells against lipotoxicity. The sequence is that of Glycerol-3-phosphate acyltransferase 4 from Homo sapiens (Human).